A 256-amino-acid polypeptide reads, in one-letter code: Pyridoxine 5'-phosphate synthase (256 aa).

Residues N8 and R19 each coordinate 3-amino-2-oxopropyl phosphate. The Proton acceptor role is filled by H44. 1-deoxy-D-xylulose 5-phosphate contacts are provided by R46 and H51. E74 (proton acceptor) is an active-site residue. T111 is a 1-deoxy-D-xylulose 5-phosphate binding site. H202 serves as the catalytic Proton donor. Residues D203 and 225–226 (GH) contribute to the 3-amino-2-oxopropyl phosphate site.

Belongs to the PNP synthase family. As to quaternary structure, homooctamer; tetramer of dimers.

The protein localises to the cytoplasm. The catalysed reaction is 3-amino-2-oxopropyl phosphate + 1-deoxy-D-xylulose 5-phosphate = pyridoxine 5'-phosphate + phosphate + 2 H2O + H(+). It participates in cofactor biosynthesis; pyridoxine 5'-phosphate biosynthesis; pyridoxine 5'-phosphate from D-erythrose 4-phosphate: step 5/5. Its function is as follows. Catalyzes the complicated ring closure reaction between the two acyclic compounds 1-deoxy-D-xylulose-5-phosphate (DXP) and 3-amino-2-oxopropyl phosphate (1-amino-acetone-3-phosphate or AAP) to form pyridoxine 5'-phosphate (PNP) and inorganic phosphate. This is Pyridoxine 5'-phosphate synthase from Xanthomonas campestris pv. campestris (strain 8004).